A 267-amino-acid polypeptide reads, in one-letter code: Ribosomal RNA small subunit methyltransferase A (267 aa).

S-adenosyl-L-methionine-binding residues include Asn18, Leu20, Gly45, Glu66, Asp91, and Asn112.

The protein belongs to the class I-like SAM-binding methyltransferase superfamily. rRNA adenine N(6)-methyltransferase family. RsmA subfamily.

It localises to the cytoplasm. The catalysed reaction is adenosine(1518)/adenosine(1519) in 16S rRNA + 4 S-adenosyl-L-methionine = N(6)-dimethyladenosine(1518)/N(6)-dimethyladenosine(1519) in 16S rRNA + 4 S-adenosyl-L-homocysteine + 4 H(+). Functionally, specifically dimethylates two adjacent adenosines (A1518 and A1519) in the loop of a conserved hairpin near the 3'-end of 16S rRNA in the 30S particle. May play a critical role in biogenesis of 30S subunits. The sequence is that of Ribosomal RNA small subunit methyltransferase A from Shewanella pealeana (strain ATCC 700345 / ANG-SQ1).